A 431-amino-acid chain; its full sequence is Tyrosine--tRNA ligase (431 aa).

Tyr34 contacts L-tyrosine. Positions Pro39–His48 match the 'HIGH' region motif. Positions 171 and 175 each coordinate L-tyrosine. A 'KMSKS' region motif is present at residues Lys231–Thr235. Lys234 lines the ATP pocket. Residues Ile353–Lys422 form the S4 RNA-binding domain.

This sequence belongs to the class-I aminoacyl-tRNA synthetase family. TyrS type 1 subfamily. In terms of assembly, homodimer.

It localises to the cytoplasm. The enzyme catalyses tRNA(Tyr) + L-tyrosine + ATP = L-tyrosyl-tRNA(Tyr) + AMP + diphosphate + H(+). In terms of biological role, catalyzes the attachment of tyrosine to tRNA(Tyr) in a two-step reaction: tyrosine is first activated by ATP to form Tyr-AMP and then transferred to the acceptor end of tRNA(Tyr). The sequence is that of Tyrosine--tRNA ligase from Neisseria gonorrhoeae (strain ATCC 700825 / FA 1090).